The following is a 128-amino-acid chain: Sulfurtransferase TusD (128 aa).

Cysteine 78 functions as the Cysteine persulfide intermediate in the catalytic mechanism.

Belongs to the DsrE/TusD family. Heterohexamer, formed by a dimer of trimers. The hexameric TusBCD complex contains 2 copies each of TusB, TusC and TusD. The TusBCD complex interacts with TusE.

The protein resides in the cytoplasm. Its function is as follows. Part of a sulfur-relay system required for 2-thiolation of 5-methylaminomethyl-2-thiouridine (mnm(5)s(2)U) at tRNA wobble positions. Accepts sulfur from TusA and transfers it in turn to TusE. The chain is Sulfurtransferase TusD from Citrobacter koseri (strain ATCC BAA-895 / CDC 4225-83 / SGSC4696).